The following is a 132-amino-acid chain: Extracellular small neutral protease (132 aa).

Asp76 and Thr78 together coordinate Ca(2+). Zn(2+) is bound at residue His83. Glu84 is an active-site residue. Zn(2+)-binding residues include His87 and Asp93. Cys99 and Cys112 are oxidised to a cystine.

The protein belongs to the peptidase M7 family. Ca(2+) is required as a cofactor. Requires Zn(2+) as cofactor.

It localises to the secreted. It catalyses the reaction Hydrolyzes proteins with a preference for Tyr or Phe in the P1' position. Has no action on amino-acid p-nitroanilides.. Its function is as follows. Specifically hydrolyzes the peptide bond at the imino side of aromatic residues. In Streptomyces caespitosus, this protein is Extracellular small neutral protease (snpA).